Consider the following 360-residue polypeptide: MAIATTKTALTTIMNWMTFTDDSKEQLKIVEGRLFQSCEVSYEAKYVPVRFKRGEVYTVTVRPREAENLNGEAIVFIPGLGAGVAMFTANFNSCAKNHAVHSFDPLGFGRSSRSRFSDDNAIAELEMVEVMEDWRKAMGIEKMYIIGHAFGGYLASAYALENPSRVAHLILVDPWGFAEKVETTEKLIKPYAWMSFLGGVAGYFNPFSPMRWMGPYAPAIVKKLRPDLLLRFPGLHDYDIYKYVYYLNLPNPTGETAFMNMTLPVGWAKRPMIKRFNGIDKNVGVSFIYGSKSWIDPGPAIDIQSTRENAYVDIKIVRGAGTHVYADDPAAFNEIVSDVVEGRLSNPSNDFEIEECCHSD.

The 131-residue stretch at 73 to 203 (AIVFIPGLGA…MSFLGGVAGY (131 aa)) folds into the AB hydrolase-1 domain.

It belongs to the peptidase S33 family. ABHD4/ABHD5 subfamily. As to quaternary structure, interacts with atgl-1.

It is found in the lipid droplet. Functionally, acts coordinately with atgl-1 within the lipolytic cascade to distribute stored energy to tissues during nutritional deprivation. In Caenorhabditis elegans, this protein is Abhydrolase domain-containing protein lid-1.